A 282-amino-acid polypeptide reads, in one-letter code: Armadillo repeat-containing protein 1 (282 aa).

Position 1 is an N-acetylmethionine (methionine 1). The ARM repeat unit spans residues 39-81; the sequence is GCLPGLILFMDHPNPPVVHSALLALRYLAECRANREKMKGELG. Threonine 137 bears the Phosphothreonine mark. Phosphoserine occurs at positions 189, 246, 260, and 267. Residues 239–261 are disordered; sequence DYLPEDESPTKEQDKAVSRVGSH. Residues 246–255 show a composition bias toward basic and acidic residues; the sequence is SPTKEQDKAV.

As to quaternary structure, interacts with mitochondrial contact site and cristae organizing system (MICOS) complex components IMMT/MIC60 and MICOS10/MIC10. Interacts with mitochondrial outer membrane sorting assembly machinery (SAM) complex components SAMM50 and MTX1.

It localises to the cytoplasm. It is found in the mitochondrion. Its subcellular location is the mitochondrion outer membrane. Its function is as follows. In association with mitochondrial contact site and cristae organizing system (MICOS) complex components and mitochondrial outer membrane sorting assembly machinery (SAM) complex components may regulate mitochondrial dynamics playing a role in determining mitochondrial length, distribution and motility. The sequence is that of Armadillo repeat-containing protein 1 (ARMC1) from Bos taurus (Bovine).